Reading from the N-terminus, the 474-residue chain is Ribulose bisphosphate carboxylase large chain (474 aa).

Asn122 and Thr172 together coordinate substrate. The active-site Proton acceptor is the Lys174. Substrate is bound at residue Lys176. Residues Lys200, Asp202, and Glu203 each coordinate Mg(2+). Position 200 is an N6-carboxylysine (Lys200). Residue His293 is the Proton acceptor of the active site. 3 residues coordinate substrate: Arg294, His326, and Ser378.

It belongs to the RuBisCO large chain family. Type I subfamily. As to quaternary structure, heterohexadecamer of 8 large chains and 8 small chains; disulfide-linked. The disulfide link is formed within the large subunit homodimers. It depends on Mg(2+) as a cofactor. In terms of processing, the disulfide bond which can form in the large chain dimeric partners within the hexadecamer appears to be associated with oxidative stress and protein turnover.

It is found in the carboxysome. It catalyses the reaction 2 (2R)-3-phosphoglycerate + 2 H(+) = D-ribulose 1,5-bisphosphate + CO2 + H2O. The catalysed reaction is D-ribulose 1,5-bisphosphate + O2 = 2-phosphoglycolate + (2R)-3-phosphoglycerate + 2 H(+). RuBisCO catalyzes two reactions: the carboxylation of D-ribulose 1,5-bisphosphate, the primary event in carbon dioxide fixation, as well as the oxidative fragmentation of the pentose substrate in the photorespiration process. Both reactions occur simultaneously and in competition at the same active site. This chain is Ribulose bisphosphate carboxylase large chain, found in Gloeobacter violaceus (strain ATCC 29082 / PCC 7421).